The sequence spans 135 residues: L-alanine exporter AlaE (135 aa).

3 helical membrane passes run 9–29 (VATVIFFTAVATFSELLIAGM), 75–95 (DILAFLSFQAPVYGATLLIAG), and 96–116 (ASFAEAGTAIGSAIILMILLA).

This sequence belongs to the AlaE exporter family.

The protein resides in the cell inner membrane. Functionally, exports L-alanine. The polypeptide is L-alanine exporter AlaE (Cereibacter sphaeroides (strain ATCC 17023 / DSM 158 / JCM 6121 / CCUG 31486 / LMG 2827 / NBRC 12203 / NCIMB 8253 / ATH 2.4.1.) (Rhodobacter sphaeroides)).